The primary structure comprises 294 residues: 33 kDa chaperonin (294 aa).

Intrachain disulfides connect Cys231–Cys233 and Cys264–Cys267.

Belongs to the HSP33 family. Post-translationally, under oxidizing conditions two disulfide bonds are formed involving the reactive cysteines. Under reducing conditions zinc is bound to the reactive cysteines and the protein is inactive.

It is found in the cytoplasm. Functionally, redox regulated molecular chaperone. Protects both thermally unfolding and oxidatively damaged proteins from irreversible aggregation. Plays an important role in the bacterial defense system toward oxidative stress. The chain is 33 kDa chaperonin from Aeromonas salmonicida (strain A449).